The following is a 62-amino-acid chain: Andropin (62 aa).

The first 22 residues, 1–22 (MKYFSVLVVLTLILAIVDQSDA), serve as a signal peptide directing secretion.

The protein belongs to the andropin family. In terms of tissue distribution, ejaculatory duct of adult males.

The protein localises to the secreted. Male-specific peptide with moderate activity against Gram-positive bacteria. This is Andropin (Anp) from Drosophila teissieri (Fruit fly).